Here is a 504-residue protein sequence, read N- to C-terminus: Putative lipase ATG15 (504 aa).

Residue M1 is a topological domain, cytoplasmic. A helical; Signal-anchor for type II membrane protein membrane pass occupies residues 2–22 (LGRQVTMLLKVIVAVAVLFVW). Residues 23-504 (HRSRDSSRGD…WLGICTDYGV (482 aa)) are Lumenal-facing. A glycan (N-linked (GlcNAc...) asparagine) is linked at N183. The active-site Charge relay system is S313. Residues 458 to 484 (EESSSSIASSSQLTSSHSESETLTSTD) form a disordered region. A compositionally biased stretch (low complexity) spans 461–483 (SSSIASSSQLTSSHSESETLTST).

Belongs to the AB hydrolase superfamily. Lipase family. As to quaternary structure, binds to both phosphatidylinositol (PI) and phosphatidylinositol 3,5-bisphosphate (PIP2).

The protein localises to the endosome. Its subcellular location is the multivesicular body membrane. It localises to the prevacuolar compartment membrane. It carries out the reaction a triacylglycerol + H2O = a diacylglycerol + a fatty acid + H(+). In terms of biological role, lipase which is essential for lysis of subvacuolar cytoplasm to vacuole targeted bodies and intravacuolar autophagic bodies. Involved in the lysis of intravacuolar multivesicular body (MVB) vesicles. The intravacuolar membrane disintegration by ATG15 is critical to life span extension. In Candida glabrata (strain ATCC 2001 / BCRC 20586 / JCM 3761 / NBRC 0622 / NRRL Y-65 / CBS 138) (Yeast), this protein is Putative lipase ATG15 (ATG15).